The following is a 267-amino-acid chain: tRNA-cytidine(32) 2-sulfurtransferase 2 (267 aa).

The PP-loop motif motif lies at 42–47; that stretch reads SGGKDS. [4Fe-4S] cluster-binding residues include Cys117, Cys120, and Cys208.

It belongs to the TtcA family. Homodimer. It depends on Mg(2+) as a cofactor. The cofactor is [4Fe-4S] cluster.

It localises to the cytoplasm. It catalyses the reaction cytidine(32) in tRNA + S-sulfanyl-L-cysteinyl-[cysteine desulfurase] + AH2 + ATP = 2-thiocytidine(32) in tRNA + L-cysteinyl-[cysteine desulfurase] + A + AMP + diphosphate + H(+). Its pathway is tRNA modification. In terms of biological role, catalyzes the ATP-dependent 2-thiolation of cytidine in position 32 of tRNA, to form 2-thiocytidine (s(2)C32). The sulfur atoms are provided by the cysteine/cysteine desulfurase (IscS) system. The polypeptide is tRNA-cytidine(32) 2-sulfurtransferase 2 (Francisella tularensis subsp. holarctica (strain FTNF002-00 / FTA)).